Here is a 308-residue protein sequence, read N- to C-terminus: uncharacterized protein (308 aa).

This is an uncharacterized protein from Methanocaldococcus jannaschii (strain ATCC 43067 / DSM 2661 / JAL-1 / JCM 10045 / NBRC 100440) (Methanococcus jannaschii).